The sequence spans 488 residues: Malonate-semialdehyde dehydrogenase (488 aa).

NAD(+) is bound by residues alanine 150, phenylalanine 152, lysine 176, glutamate 179, arginine 180, serine 229, and threonine 251. The Nucleophile role is filled by cysteine 284. Glutamate 382 lines the NAD(+) pocket.

This sequence belongs to the aldehyde dehydrogenase family. IolA subfamily. As to quaternary structure, homotetramer.

The enzyme catalyses 3-oxopropanoate + NAD(+) + CoA + H2O = hydrogencarbonate + acetyl-CoA + NADH + H(+). It carries out the reaction 2-methyl-3-oxopropanoate + NAD(+) + CoA + H2O = propanoyl-CoA + hydrogencarbonate + NADH + H(+). It functions in the pathway polyol metabolism; myo-inositol degradation into acetyl-CoA; acetyl-CoA from myo-inositol: step 7/7. Functionally, catalyzes the oxidation of malonate semialdehyde (MSA) and methylmalonate semialdehyde (MMSA) into acetyl-CoA and propanoyl-CoA, respectively. Is involved in a myo-inositol catabolic pathway. Bicarbonate, and not CO2, is the end-product of the enzymatic reaction. The chain is Malonate-semialdehyde dehydrogenase from Listeria monocytogenes serovar 1/2a (strain ATCC BAA-679 / EGD-e).